A 96-amino-acid polypeptide reads, in one-letter code: Co-chaperonin GroES (96 aa).

It belongs to the GroES chaperonin family. Heptamer of 7 subunits arranged in a ring. Interacts with the chaperonin GroEL.

It localises to the cytoplasm. In terms of biological role, together with the chaperonin GroEL, plays an essential role in assisting protein folding. The GroEL-GroES system forms a nano-cage that allows encapsulation of the non-native substrate proteins and provides a physical environment optimized to promote and accelerate protein folding. GroES binds to the apical surface of the GroEL ring, thereby capping the opening of the GroEL channel. This Halorhodospira halophila (strain DSM 244 / SL1) (Ectothiorhodospira halophila (strain DSM 244 / SL1)) protein is Co-chaperonin GroES.